A 231-amino-acid polypeptide reads, in one-letter code: Ribosomal RNA small subunit methyltransferase G (231 aa).

S-adenosyl-L-methionine is bound by residues glycine 75, 125-126 (GE), and arginine 140. Positions 204–213 (AEAEEGDSPE) are enriched in acidic residues. The disordered stretch occupies residues 204 to 231 (AEAEEGDSPEAADASRGVILELTKKNKG).

This sequence belongs to the methyltransferase superfamily. RNA methyltransferase RsmG family.

It is found in the cytoplasm. Its function is as follows. Specifically methylates the N7 position of a guanine in 16S rRNA. The sequence is that of Ribosomal RNA small subunit methyltransferase G from Rhodopirellula baltica (strain DSM 10527 / NCIMB 13988 / SH1).